Consider the following 242-residue polypeptide: 6-carboxyhexanoate--CoA ligase (242 aa).

This sequence belongs to the BioW family. In terms of assembly, homodimer. Mg(2+) is required as a cofactor.

The catalysed reaction is heptanedioate + ATP + CoA = 6-carboxyhexanoyl-CoA + AMP + diphosphate. It participates in metabolic intermediate metabolism; pimeloyl-CoA biosynthesis; pimeloyl-CoA from pimelate: step 1/1. Functionally, catalyzes the transformation of pimelate into pimeloyl-CoA with concomitant hydrolysis of ATP to AMP. The polypeptide is 6-carboxyhexanoate--CoA ligase (Veillonella parvula (strain ATCC 10790 / DSM 2008 / CCUG 5123 / JCM 12972 / NCTC 11810 / Te3) (Veillonella alcalescens)).